The chain runs to 342 residues: S-adenosylmethionine:tRNA ribosyltransferase-isomerase (342 aa).

The protein belongs to the QueA family. As to quaternary structure, monomer.

It localises to the cytoplasm. It catalyses the reaction 7-aminomethyl-7-carbaguanosine(34) in tRNA + S-adenosyl-L-methionine = epoxyqueuosine(34) in tRNA + adenine + L-methionine + 2 H(+). It functions in the pathway tRNA modification; tRNA-queuosine biosynthesis. Transfers and isomerizes the ribose moiety from AdoMet to the 7-aminomethyl group of 7-deazaguanine (preQ1-tRNA) to give epoxyqueuosine (oQ-tRNA). The polypeptide is S-adenosylmethionine:tRNA ribosyltransferase-isomerase (Streptococcus pyogenes serotype M1).